The primary structure comprises 632 residues: Phosphomethylpyrimidine synthase (632 aa).

Substrate contacts are provided by residues Asn237, Met266, Tyr295, His331, 351–353, 392–395, and Glu431; these read SRG and DGLR. A Zn(2+)-binding site is contributed by His435. Residue Tyr458 coordinates substrate. His499 lines the Zn(2+) pocket. [4Fe-4S] cluster-binding residues include Cys579, Cys582, and Cys587.

It belongs to the ThiC family. As to quaternary structure, homodimer. [4Fe-4S] cluster is required as a cofactor.

The catalysed reaction is 5-amino-1-(5-phospho-beta-D-ribosyl)imidazole + S-adenosyl-L-methionine = 4-amino-2-methyl-5-(phosphooxymethyl)pyrimidine + CO + 5'-deoxyadenosine + formate + L-methionine + 3 H(+). It functions in the pathway cofactor biosynthesis; thiamine diphosphate biosynthesis. Its function is as follows. Catalyzes the synthesis of the hydroxymethylpyrimidine phosphate (HMP-P) moiety of thiamine from aminoimidazole ribotide (AIR) in a radical S-adenosyl-L-methionine (SAM)-dependent reaction. This Chromobacterium violaceum (strain ATCC 12472 / DSM 30191 / JCM 1249 / CCUG 213 / NBRC 12614 / NCIMB 9131 / NCTC 9757 / MK) protein is Phosphomethylpyrimidine synthase.